We begin with the raw amino-acid sequence, 238 residues long: Envelope glycoprotein G (238 aa).

Residues 1 to 24 form the signal peptide; sequence MSQGAMRAVVPIIPFLLVLVGVSG. Over 25–189 the chain is Virion surface; sequence VPTNVSSTTQ…SFLTASPALD (165 aa). Residues N28 and N49 are each glycosylated (N-linked (GlcNAc...) asparagine; by host). Polar residues-rich tracts occupy residues 28–42 and 49–68; these read NVSSTTQPQLQTTGR and NMTQTGTTDSPTAISLTTPD. The tract at residues 28-171 is disordered; it reads NVSSTTQPQL…LTSKGRPLVP (144 aa). The segment covering 78 to 88 has biased composition (acidic residues); the sequence is LEEEEEEEGAG. The span at 89–100 shows a compositional bias: basic and acidic residues; the sequence is DGEHLEGGDGTR. Residues 190–210 traverse the membrane as a helical segment; the sequence is TLFVVSTVIHTLSFLCIGAMA. Residues 211 to 238 are Intravirion-facing; the sequence is THLCGGWSRRGRRTHPSVRYVCLPSERG.

This sequence belongs to the alphaherpesvirinae glycoprotein G family.

Its subcellular location is the virion membrane. In terms of biological role, chemokine-binding protein that inhibits neutrophils' chemotaxis. This chain is Envelope glycoprotein G (gG), found in Human herpesvirus 1 (strain 17) (HHV-1).